The following is a 962-amino-acid chain: Glycine dehydrogenase (decarboxylating) (962 aa).

K709 carries the N6-(pyridoxal phosphate)lysine modification.

This sequence belongs to the GcvP family. In terms of assembly, the glycine cleavage system is composed of four proteins: P, T, L and H. Pyridoxal 5'-phosphate serves as cofactor.

The catalysed reaction is N(6)-[(R)-lipoyl]-L-lysyl-[glycine-cleavage complex H protein] + glycine + H(+) = N(6)-[(R)-S(8)-aminomethyldihydrolipoyl]-L-lysyl-[glycine-cleavage complex H protein] + CO2. The glycine cleavage system catalyzes the degradation of glycine. The P protein binds the alpha-amino group of glycine through its pyridoxal phosphate cofactor; CO(2) is released and the remaining methylamine moiety is then transferred to the lipoamide cofactor of the H protein. The polypeptide is Glycine dehydrogenase (decarboxylating) (Shewanella frigidimarina (strain NCIMB 400)).